Consider the following 616-residue polypeptide: Chaperone protein HscA (616 aa).

This sequence belongs to the heat shock protein 70 family.

Its function is as follows. Chaperone involved in the maturation of iron-sulfur cluster-containing proteins. Has a low intrinsic ATPase activity which is markedly stimulated by HscB. Involved in the maturation of IscU. This Serratia proteamaculans (strain 568) protein is Chaperone protein HscA.